We begin with the raw amino-acid sequence, 98 residues long: NADH-ubiquinone oxidoreductase chain 4L (98 aa).

3 helical membrane-spanning segments follow: residues 1 to 21 (MSMVYANIFLAFIMSLMGLLV), 30 to 50 (LLCLEGMMLSLFVMMTVTILI), and 61 to 81 (IILLVFAACEAALGLSLLVMV).

It belongs to the complex I subunit 4L family. Core subunit of respiratory chain NADH dehydrogenase (Complex I) which is composed of 45 different subunits.

It is found in the mitochondrion inner membrane. It carries out the reaction a ubiquinone + NADH + 5 H(+)(in) = a ubiquinol + NAD(+) + 4 H(+)(out). Its function is as follows. Core subunit of the mitochondrial membrane respiratory chain NADH dehydrogenase (Complex I) which catalyzes electron transfer from NADH through the respiratory chain, using ubiquinone as an electron acceptor. Part of the enzyme membrane arm which is embedded in the lipid bilayer and involved in proton translocation. This chain is NADH-ubiquinone oxidoreductase chain 4L (MT-ND4L), found in Pagophilus groenlandicus (Harp seal).